Reading from the N-terminus, the 348-residue chain is GTP 3',8-cyclase (348 aa).

The 225-residue stretch at 24 to 248 (PFGRAVTYLR…TDIDYQTGGP (225 aa)) folds into the Radical SAM core domain. Arginine 33 is a binding site for GTP. Residues cysteine 40 and cysteine 44 each contribute to the [4Fe-4S] cluster site. Residue tyrosine 46 participates in S-adenosyl-L-methionine binding. A [4Fe-4S] cluster-binding site is contributed by cysteine 47. Residue arginine 82 participates in GTP binding. Position 86 (glycine 86) interacts with S-adenosyl-L-methionine. Threonine 115 serves as a coordination point for GTP. Serine 139 is a binding site for S-adenosyl-L-methionine. Lysine 175 is a GTP binding site. Methionine 209 serves as a coordination point for S-adenosyl-L-methionine. Positions 272 and 275 each coordinate [4Fe-4S] cluster. Residue 277-279 (RVR) coordinates GTP. Cysteine 289 provides a ligand contact to [4Fe-4S] cluster.

Belongs to the radical SAM superfamily. MoaA family. Monomer and homodimer. The cofactor is [4Fe-4S] cluster.

The catalysed reaction is GTP + AH2 + S-adenosyl-L-methionine = (8S)-3',8-cyclo-7,8-dihydroguanosine 5'-triphosphate + 5'-deoxyadenosine + L-methionine + A + H(+). It participates in cofactor biosynthesis; molybdopterin biosynthesis. In terms of biological role, catalyzes the cyclization of GTP to (8S)-3',8-cyclo-7,8-dihydroguanosine 5'-triphosphate. The chain is GTP 3',8-cyclase from Rhizobium etli (strain ATCC 51251 / DSM 11541 / JCM 21823 / NBRC 15573 / CFN 42).